Reading from the N-terminus, the 246-residue chain is Small ribosomal subunit protein uS2 (246 aa).

It belongs to the universal ribosomal protein uS2 family.

This Burkholderia thailandensis (strain ATCC 700388 / DSM 13276 / CCUG 48851 / CIP 106301 / E264) protein is Small ribosomal subunit protein uS2.